The sequence spans 318 residues: Oncosphere antigen A (318 aa).

3 Fibronectin type-III domains span residues isoleucine 6–proline 103, lysine 109–alanine 207, and valine 211–valine 308.

The chain is Oncosphere antigen A (ONCA) from Hydatigena taeniaeformis (Feline tapeworm).